A 498-amino-acid chain; its full sequence is Fascin-3 (498 aa).

Belongs to the fascin family. Expressed in testis.

The protein resides in the cytoplasm. Its subcellular location is the cytoskeleton. Acts as an actin bundling protein. The sequence is that of Fascin-3 (Fscn3) from Mus musculus (Mouse).